The sequence spans 643 residues: Threonine--tRNA ligase (643 aa).

In terms of domain architecture, TGS spans 1-61; it reads MPIITLPDGS…SEDSSLEIIT (61 aa). Positions 243–534 are catalytic; sequence DHRRIGKALD…ITEEYAGFFP (292 aa). 3 residues coordinate Zn(2+): cysteine 334, histidine 385, and histidine 511.

Belongs to the class-II aminoacyl-tRNA synthetase family. Homodimer. Zn(2+) serves as cofactor.

It is found in the cytoplasm. The catalysed reaction is tRNA(Thr) + L-threonine + ATP = L-threonyl-tRNA(Thr) + AMP + diphosphate + H(+). Its function is as follows. Catalyzes the attachment of threonine to tRNA(Thr) in a two-step reaction: L-threonine is first activated by ATP to form Thr-AMP and then transferred to the acceptor end of tRNA(Thr). Also edits incorrectly charged L-seryl-tRNA(Thr). The sequence is that of Threonine--tRNA ligase from Actinobacillus pleuropneumoniae serotype 5b (strain L20).